The sequence spans 739 residues: Thiamine biosynthesis multifunctional protein ThiED (739 aa).

The thiamine-phosphate synthase stretch occupies residues 1-210; that stretch reads MTDFSLYLVT…PSPAEAAREL (210 aa). Residues 37 to 41 and Asn69 contribute to the 4-amino-2-methyl-5-(diphosphooxymethyl)pyrimidine site; that span reads QLRDK. Mg(2+)-binding residues include Asp70 and Asp88. Thr107 is a binding site for 4-amino-2-methyl-5-(diphosphooxymethyl)pyrimidine. 140–142 contributes to the 2-[(2R,5Z)-2-carboxy-4-methylthiazol-5(2H)-ylidene]ethyl phosphate binding site; sequence TDT. Residue Lys143 coordinates 4-amino-2-methyl-5-(diphosphooxymethyl)pyrimidine. 2-[(2R,5Z)-2-carboxy-4-methylthiazol-5(2H)-ylidene]ethyl phosphate-binding positions include Gly174 and 194–195; that span reads VS. The hydroxymethylpyrimidine/phosphomethylpyrimidine kinase stretch occupies residues 226–481; it reads LTIAGTDPTG…GSGSGPVDHF (256 aa). Gln263 is a binding site for 4-amino-5-hydroxymethyl-2-methylpyrimidine. The tract at residues 527 to 739 is thiaminase-2; it reads YTRALWEATG…FDQATRQGWN (213 aa).

In the N-terminal section; belongs to the thiamine-phosphate synthase family. The protein in the central section; belongs to the ThiD family. This sequence in the C-terminal section; belongs to the thiaminase-2 family. It depends on Mg(2+) as a cofactor.

The catalysed reaction is 2-[(2R,5Z)-2-carboxy-4-methylthiazol-5(2H)-ylidene]ethyl phosphate + 4-amino-2-methyl-5-(diphosphooxymethyl)pyrimidine + 2 H(+) = thiamine phosphate + CO2 + diphosphate. It catalyses the reaction 2-(2-carboxy-4-methylthiazol-5-yl)ethyl phosphate + 4-amino-2-methyl-5-(diphosphooxymethyl)pyrimidine + 2 H(+) = thiamine phosphate + CO2 + diphosphate. It carries out the reaction 4-methyl-5-(2-phosphooxyethyl)-thiazole + 4-amino-2-methyl-5-(diphosphooxymethyl)pyrimidine + H(+) = thiamine phosphate + diphosphate. The enzyme catalyses 4-amino-5-hydroxymethyl-2-methylpyrimidine + ATP = 4-amino-2-methyl-5-(phosphooxymethyl)pyrimidine + ADP + H(+). The catalysed reaction is 4-amino-2-methyl-5-(phosphooxymethyl)pyrimidine + ATP = 4-amino-2-methyl-5-(diphosphooxymethyl)pyrimidine + ADP. It functions in the pathway cofactor biosynthesis; thiamine diphosphate biosynthesis; 4-amino-2-methyl-5-diphosphomethylpyrimidine from 5-amino-1-(5-phospho-D-ribosyl)imidazole: step 3/3. Its pathway is cofactor biosynthesis; thiamine diphosphate biosynthesis; thiamine phosphate from 4-amino-2-methyl-5-diphosphomethylpyrimidine and 4-methyl-5-(2-phosphoethyl)-thiazole: step 1/1. Its function is as follows. Condenses 4-methyl-5-(beta-hydroxyethyl)thiazole monophosphate (THZ-P) and 2-methyl-4-amino-5-hydroxymethyl pyrimidine pyrophosphate (HMP-PP) to form thiamine monophosphate (TMP). In terms of biological role, catalyzes the phosphorylation of hydroxymethylpyrimidine phosphate (HMP-P) to HMP-PP, and of HMP to HMP-P. The sequence is that of Thiamine biosynthesis multifunctional protein ThiED (thiED) from Corynebacterium efficiens (strain DSM 44549 / YS-314 / AJ 12310 / JCM 11189 / NBRC 100395).